A 661-amino-acid chain; its full sequence is MSDDWDDEPIVDTRGARGGDWSDDEDTAKSFSGEAEGDGVGGSGGEGGGYQGGNRDVFGRIGGGRGGGAGGYRGGNRDGGGFHGGRREGERDFRGGEGGFRGGQGGSRGGQGGSRGGQGGFRGGEGGFRGRLYENEDGDERRGRLDREERGGERRGRLDREERGGERGERGDGGFARRRRNEDDINNNNNIVEDVERKREFYIPPEPSNDAIEIFSSGIASGIHFSKYNNIPVKVTGSDVPQPIQHFTSADLRDIIIDNVNKSGYKIPTPIQKCSIPVISSGRDLMACAQTGSGKTAAFLLPILSKLLEDPHELELGRPQVVIVSPTRELAIQIFNEARKFAFESYLKIGIVYGGTSFRHQNECITRGCHVVIATPGRLLDFVDRTFITFEDTRFVVLDEADRMLDMGFSEDMRRIMTHVTMRPEHQTLMFSATFPEEIQRMAGEFLKNYVFVAIGIVGGACSDVKQTIYEVNKYAKRSKLIEILSEQADGTIVFVETKRGADFLASFLSEKEFPTTSIHGDRLQSQREQALRDFKNGSMKVLIATSVASRGLDIKNIKHVINYDMPSKIDDYVHRIGRTGRVGNNGRATSFFDPEKDRAIAADLVKILEGSGQTVPDFLRTCGAGGDGGYSNQNFGGVDVRGRGNYVGDATNVEEEEQWD.

Acidic residues predominate over residues 1–10 (MSDDWDDEPI). A disordered region spans residues 1-186 (MSDDWDDEPI…RRRRNEDDIN (186 aa)). Residue Ser-22 is modified to Phosphoserine. Thr-27 carries the post-translational modification Phosphothreonine. 2 stretches are compositionally biased toward gly residues: residues 38-52 (DGVG…GYQG) and 60-83 (RIGG…GGFH). Over residues 85–95 (GRREGERDFRG) the composition is skewed to basic and acidic residues. Tandem repeats lie at residues 93–99 (FRGGEGG), 100–106 (FRGGQGG), 107–113 (SRGGQGG), 114–120 (SRGGQGG), and 121–127 (FRGGEGG). Positions 93–127 (FRGGEGGFRGGQGGSRGGQGGSRGGQGGFRGGEGG) are 5 X 7 AA tandem repeats of [FS]-R-G-G-[EQ]-G-G. The span at 96-129 (GEGGFRGGQGGSRGGQGGSRGGQGGFRGGEGGFR) shows a compositional bias: gly residues. A compositionally biased stretch (basic and acidic residues) spans 131–172 (RLYENEDGDERRGRLDREERGGERRGRLDREERGGERGERGD). Residues 184–188 (DINNN) carry the B30.2/SPRY domain-binding motif motif. The tract at residues 184-203 (DINNNNNIVEDVERKREFYI) is required for posterior localization in oocyte. Residues 245–273 (QHFTSADLRDIIIDNVNKSGYKIPTPIQK) carry the Q motif motif. The Helicase ATP-binding domain maps to 276–453 (IPVISSGRDL…GEFLKNYVFV (178 aa)). 289 to 296 (AQTGSGKT) contributes to the ATP binding site. Residues 399–402 (DEAD) carry the DEAD box motif. One can recognise a Helicase C-terminal domain in the interval 477 to 624 (KRSKLIEILS…TVPDFLRTCG (148 aa)).

It belongs to the DEAD box helicase family. DDX4/VASA subfamily. In terms of assembly, interacts with eIF5B and faf. Interacts with gus (via B30.2/SPRY domain) and Fsn (via B30.2/SPRY domain). Interacts with aub, me31B, eIF-4a and TER94. Interacts with piwi; this interaction is RNA independent. Interacts with Dcr-1 and Fmr1; these interactions occur in the polar granules. Mg(2+) serves as cofactor. In terms of processing, ubiquitinated during oogenesis. Deubiquitinated by faf, which protects this protein from proteasome-mediated degradation. As to expression, abundantly expressed in the female germline. Gus and faf are required for vas expression in the posterior pole of the oocyte.

The protein localises to the cytoplasm. Its subcellular location is the perinuclear region. It localises to the cytoplasmic ribonucleoprotein granule. The catalysed reaction is ATP + H2O = ADP + phosphate + H(+). Functionally, involved in translational control mechanisms operating in early stages of oogenesis. Required maternally in many stages of oogenesis, including cystocyte differentiation, oocyte differentiation, and specification of anterior-posterior polarity in the developing cysts. Essential for the formation and/or structural integrity of perinuclear nuage particles during germ cell formation. Required for gus, Fsn and aub accumulation at the posterior pole of the embryo. Required for the localization of vas to the perinuclear region of nurse cells. May have a role in production of piwi-interacting RNA (piRNA). In Drosophila melanogaster (Fruit fly), this protein is ATP-dependent RNA helicase vasa.